Consider the following 273-residue polypeptide: Formamidopyrimidine-DNA glycosylase (273 aa).

The Schiff-base intermediate with DNA role is filled by P2. E3 acts as the Proton donor in catalysis. K58 functions as the Proton donor; for beta-elimination activity in the catalytic mechanism. Positions 92, 111, and 153 each coordinate DNA. The FPG-type zinc-finger motif lies at 238-272; the sequence is MVYARDGQECLSCSSSIIKTKHSGRSTFYCKSCQK. The active-site Proton donor; for delta-elimination activity is R262.

The protein belongs to the FPG family. As to quaternary structure, monomer. Zn(2+) is required as a cofactor.

It carries out the reaction Hydrolysis of DNA containing ring-opened 7-methylguanine residues, releasing 2,6-diamino-4-hydroxy-5-(N-methyl)formamidopyrimidine.. It catalyses the reaction 2'-deoxyribonucleotide-(2'-deoxyribose 5'-phosphate)-2'-deoxyribonucleotide-DNA = a 3'-end 2'-deoxyribonucleotide-(2,3-dehydro-2,3-deoxyribose 5'-phosphate)-DNA + a 5'-end 5'-phospho-2'-deoxyribonucleoside-DNA + H(+). Its function is as follows. Involved in base excision repair of DNA damaged by oxidation or by mutagenic agents. Acts as a DNA glycosylase that recognizes and removes damaged bases. Has a preference for oxidized purines, such as 7,8-dihydro-8-oxoguanine (8-oxoG). Has AP (apurinic/apyrimidinic) lyase activity and introduces nicks in the DNA strand. Cleaves the DNA backbone by beta-delta elimination to generate a single-strand break at the site of the removed base with both 3'- and 5'-phosphates. The sequence is that of Formamidopyrimidine-DNA glycosylase from Rickettsia bellii (strain OSU 85-389).